The chain runs to 468 residues: Tubulin gamma chain (468 aa).

142 to 148 (AGGTGSG) contributes to the GTP binding site.

It belongs to the tubulin family.

It is found in the cytoplasm. Its subcellular location is the cytoskeleton. The protein resides in the microtubule organizing center. Tubulin is the major constituent of microtubules. The gamma chain is found at microtubule organizing centers (MTOC) such as the spindle poles, suggesting that it is involved in the minus-end nucleation of microtubule assembly. This chain is Tubulin gamma chain (TUBG), found in Chlamydomonas reinhardtii (Chlamydomonas smithii).